A 92-amino-acid polypeptide reads, in one-letter code: Secreted RxLR effector protein RXLR-C02 (92 aa).

The signal sequence occupies residues 1–21 (MQFHLLVMTTIAASFAATGSA). Residues 48 to 51 (RALR) carry the RxLR motif. The segment at 54 to 75 (ENRGLIGDDSDSSISDSDSEAK) is disordered.

This sequence belongs to the RxLR effector family.

The protein resides in the secreted. It localises to the host cytoplasm. It is found in the host nucleus. Secreted effector that suppresses pattern-triggered immunity (PTI) in plant host. The chain is Secreted RxLR effector protein RXLR-C02 from Plasmopara halstedii (Downy mildew of sunflower).